Consider the following 297-residue polypeptide: Bifunctional protein FolD (297 aa).

Residues 169-171, S196, and I237 contribute to the NADP(+) site; that span reads GRS.

It belongs to the tetrahydrofolate dehydrogenase/cyclohydrolase family. In terms of assembly, homodimer.

The enzyme catalyses (6R)-5,10-methylene-5,6,7,8-tetrahydrofolate + NADP(+) = (6R)-5,10-methenyltetrahydrofolate + NADPH. It carries out the reaction (6R)-5,10-methenyltetrahydrofolate + H2O = (6R)-10-formyltetrahydrofolate + H(+). Its pathway is one-carbon metabolism; tetrahydrofolate interconversion. Functionally, catalyzes the oxidation of 5,10-methylenetetrahydrofolate to 5,10-methenyltetrahydrofolate and then the hydrolysis of 5,10-methenyltetrahydrofolate to 10-formyltetrahydrofolate. This chain is Bifunctional protein FolD, found in Salinibacter ruber (strain DSM 13855 / M31).